The following is a 557-amino-acid chain: Myo-inositol transporter 2 (557 aa).

At 1–76 (MDFNNIPLAT…ENGEGFEAEK (76 aa)) the chain is on the cytoplasmic side. The segment at 24–69 (EMTTRPSETKKKVPFSEDMREIPSLPNEEEANATDPQANEVADENG) is disordered. Over residues 30-44 (SETKKKVPFSEDMRE) the composition is skewed to basic and acidic residues. Residues 77 to 97 (ISSWIWVLSAVAGISGLLFGY) traverse the membrane as a helical segment. Over 98-99 (DT) the chain is Extracellular. Residues 100 to 120 (GVISGALAVLGSDLGHVLSSG) form a helical membrane-spanning segment. The Cytoplasmic portion of the chain corresponds to 121 to 123 (QKE). The chain crosses the membrane as a helical span at residues 124-144 (LITSATSFAALISATTSGWLA). Topologically, residues 145–157 (DWVGRKRLLLCAD) are extracellular. A helical membrane pass occupies residues 158–178 (AIFVIGSVIMAASRNVAMMVV). Residues 179–180 (GR) are Cytoplasmic-facing. The helical transmembrane segment at 181–201 (FIVGYGIGLTSLIVPMYITEL) threads the bilayer. Topologically, residues 202–209 (APARLRGR) are extracellular. The chain crosses the membrane as a helical span at residues 210–230 (LVIIYVVFITGGQLIAYSLNA). The Cytoplasmic segment spans residues 231–240 (AFEHVHQGWR). Residues 241-261 (IMFGIGAAPALGQLISLFWTP) traverse the membrane as a helical segment. Residues 262–367 (ESPRYLLRHN…IFQSVGFKNS (106 aa)) are Extracellular-facing. The helical transmembrane segment at 368 to 388 (ISVSIVVGATNFVFTIVAFMF) threads the bilayer. The Cytoplasmic portion of the chain corresponds to 389–396 (IDRIGRRR). The chain crosses the membrane as a helical span at residues 397-417 (ILLCTSAVMIAGLALCAIAYH). Residues 418 to 432 (FLPADTTQNTNSGWQ) are Extracellular-facing. The helical transmembrane segment at 433–453 (YVVLASIIIFLASYASGIGNI) threads the bilayer. Residues 454–468 (PWQQAELFPMEVRAL) are Cytoplasmic-facing. A helical membrane pass occupies residues 469 to 489 (GAGFSTAINWVGNLIISASFL). Over 490 to 498 (TMMESITPT) the chain is Extracellular. Residues 499-519 (GTFALFAGFCFVGLVTSYFTY) traverse the membrane as a helical segment. Residues 520 to 557 (PELAGMSIENIHKLLEKGFWQAVKESTKRVRKGRIDEA) lie on the Cytoplasmic side of the membrane.

This sequence belongs to the major facilitator superfamily. Sugar transporter (TC 2.A.1.1) family.

Its subcellular location is the membrane. It catalyses the reaction myo-inositol(out) + H(+)(out) = myo-inositol(in) + H(+)(in). Functionally, transporter for myo-inositol. In Schizosaccharomyces pombe (strain 972 / ATCC 24843) (Fission yeast), this protein is Myo-inositol transporter 2 (itr2).